The sequence spans 350 residues: tRNA uridine(34) hydroxylase (350 aa).

A Rhodanese domain is found at 128 to 221 (EETDYVMIDT…YMKEYPNDQF (94 aa)). C181 (cysteine persulfide intermediate) is an active-site residue.

This sequence belongs to the TrhO family.

It catalyses the reaction uridine(34) in tRNA + AH2 + O2 = 5-hydroxyuridine(34) in tRNA + A + H2O. Functionally, catalyzes oxygen-dependent 5-hydroxyuridine (ho5U) modification at position 34 in tRNAs. The protein is tRNA uridine(34) hydroxylase of Bdellovibrio bacteriovorus (strain ATCC 15356 / DSM 50701 / NCIMB 9529 / HD100).